An 80-amino-acid polypeptide reads, in one-letter code: MSPKVQALIFIVGLITLLAAHAQEELSDNIESERGCSGAYKRCSSSQRCCEGRPCVCSAINSNCKCRKTYTELFKEYFGK.

The first 22 residues, 1–22 (MSPKVQALIFIVGLITLLAAHA), serve as a signal peptide directing secretion. The propeptide occupies 23 to 34 (QEELSDNIESER). 4 cysteine pairs are disulfide-bonded: Cys-36-Cys-50, Cys-43-Cys-55, Cys-49-Cys-66, and Cys-57-Cys-64.

This sequence belongs to the neurotoxin 02 (plectoxin) family. 05 (U19-lycotoxin) subfamily. In terms of tissue distribution, expressed by the venom gland.

It is found in the secreted. The chain is U19-lycotoxin-Ls1b from Lycosa singoriensis (Wolf spider).